The following is a 1227-amino-acid chain: Protein transport protein Sec31A (1227 aa).

WD repeat units lie at residues 4–47, 64–111, 120–160, 166–206, 209–254, 258–298, and 301–342; these read KEID…EIFE, SSAH…AGDT, KHTG…TPMT, QPLE…PIIK, DHNN…SPLR, SHTR…VLYE, and TNMQ…DGLR. The WD 8; interaction with SEC13 repeat unit spans residues 397–430; that stretch reads SFSFGGKLVTFENAKPQQQPGIDQQPQHHYVYVS. Disordered regions lie at residues 804 to 875, 905 to 1008, and 1040 to 1075; these read EAIK…YSQA, QPVA…GWND, and ADPQ…LGPY. The segment covering 905–924 has biased composition (low complexity); that stretch reads QPVAAPASASYPSPASNTNP. Residues 925 to 945 show a composition bias toward pro residues; that stretch reads PYLPAAQPVPSPLYPGQPQPS. Residues 995-1006 show a composition bias toward polar residues; sequence PASQRTGPQNGW. Residues 1040–1049 show a composition bias toward low complexity; the sequence is ADPQAQMQQP. The span at 1057 to 1069 shows a compositional bias: polar residues; sequence PSFQPQQLSTGQQ.

The protein belongs to the WD repeat SEC31 family. As to quaternary structure, COPII is composed of at least 5 proteins: the SEC23/24 complex, the SEC13/31 complex and SAR1. SEC13 and SEC31 make a 2:2 tetramer that forms the edge element of the COPII outer coat. The tetramer self-assembles in multiple copies to form the complete polyhedral cage. Interacts (via WD 8) with SEC13.

The protein resides in the cytoplasm. It is found in the cytoplasmic vesicle. Its subcellular location is the COPII-coated vesicle membrane. The protein localises to the endoplasmic reticulum membrane. Component of the coat protein complex II (COPII) which promotes the formation of transport vesicles from the endoplasmic reticulum (ER). The coat has two main functions, the physical deformation of the endoplasmic reticulum membrane into vesicles and the selection of cargo molecules. The polypeptide is Protein transport protein Sec31A (SEC31A) (Gallus gallus (Chicken)).